A 907-amino-acid chain; its full sequence is Sensor protein GacS (907 aa).

3 consecutive transmembrane segments (helical) span residues 9-25, 84-101, and 159-178; these read ASLM…WMQL, VLAH…IGSG, and LFAS…TLAV. The HAMP domain maps to 182–234; sequence RTINGPMSQIKQAVSQLKDGNLETRLPPLGSRELDELASGINRMAATLQNAQE. The Histidine kinase domain occupies 281-502; the sequence is NMSHEIRTPL…EFWISLKLPK (222 aa). A Phosphohistidine; by autocatalysis modification is found at H284. In terms of domain architecture, Response regulatory spans 658–777; the sequence is RVLCVDDNPA…QLAQVVLKWT (120 aa). D707 carries the 4-aspartylphosphate modification. The 94-residue stretch at 814-907 folds into the HPt domain; that stretch reads KADLAADMLA…RLEAEARVMA (94 aa). Position 853 is a phosphohistidine (H853).

Activation requires a sequential transfer of a phosphate group from a His in the primary transmitter domain, to an Asp in the receiver domain and to a His in the secondary transmitter domain.

The protein localises to the cell inner membrane. The catalysed reaction is ATP + protein L-histidine = ADP + protein N-phospho-L-histidine.. Functionally, forms part of a two-component regulatory system GacA/GacS(LemA). May be involved in lesion formation, swarming and in the production of extracellular protease, syringomycin and N-acyl-L-homoserine lactone (acyl-HSL). Required for pathogenicity on bean. The protein is Sensor protein GacS (gacS) of Pseudomonas syringae pv. syringae.